The following is an 857-amino-acid chain: Envelope glycoprotein gp160 (857 aa).

An N-terminal signal peptide occupies residues 1-22 (MDSRNQLIVAILLTSACLIYCA). Residues 23-671 (QYVTVFYGIP…LTSWIKYIQY (649 aa)) lie on the Extracellular side of the membrane. The N-linked (GlcNAc...) asparagine; by host glycan is linked to N36. A disulfide bridge connects residues C43 and C56. Residues N69, N78, N113, N121, N134, N142, N159, N186, N198, N230, N233, N264, N270, N281, N292, N302, N358, N364, N391, N440, and N455 are each glycosylated (N-linked (GlcNAc...) asparagine; by host). Disulfide bonds link C100–C206, C107–C197, C112–C156, C219–C249, and C229–C241. The segment at 112–155 (CNSTSTESSNSTSEGSTVPEILNETTSCITNNSCSDLGSEEVVD) is V1. The segment at 156 to 197 (CRFNMTGLQLDKPQQYSETWYSKDVVCDTTNGTSRKCYMNHC) is V2. The interval 297–330 (CKRPGNKSVLPITLRSGRVFHSRPIINERPKQAW) is V3. A disulfide bridge links C297 with C331. Cystine bridges form between C383–C439 and C390–C412. The segment at 390-412 (CNMTRFLNWIENRAHPQRNYAPC) is V4. The segment at 454–461 (DNQTSITF) is V5. The interval 504 to 524 (GVFVLGVLGFLATAGSAMGAA) is fusion peptide. The tract at residues 567–583 (LQTRVTAIEKYLRDQAR) is immunosuppression. N-linked (GlcNAc...) asparagine; by host glycosylation is found at N603, N612, and N628. Residues 616-644 (QEWEQQTRDLEANISRSLEQAQIQQEKNM) adopt a coiled-coil conformation. An MPER; binding to GalCer region spans residues 649–670 (KLNSWDVFGNWFDLTSWIKYIQ). Residues 672–692 (GVYVIIGIIALRIVIYVVQLL) traverse the membrane as a helical segment. Residues 693-857 (SRLRKGYRPV…IRQGAELALL (165 aa)) are Cytoplasmic-facing. Positions 699–702 (YRPV) match the YXXV motif; contains endocytosis signal motif. The S-palmitoyl cysteine; by host moiety is linked to residue C765. The Di-leucine internalization motif motif lies at 856-857 (LL).

In terms of assembly, the mature envelope protein (Env) consists of a homotrimer of non-covalently associated gp120-gp41 heterodimers. The resulting complex protrudes from the virus surface as a spike. There seems to be as few as 10 spikes on the average virion. Interacts with human CD4, CCR5 and CXCR4, to form a P4HB/PDI-CD4-CXCR4-gp120 complex. Gp120 also interacts with the C-type lectins CD209/DC-SIGN and CLEC4M/DC-SIGNR (collectively referred to as DC-SIGN(R)). Gp120 and gp41 interact with GalCer. The mature envelope protein (Env) consists of a homotrimer of non-covalently associated gp120-gp41 heterodimers. The resulting complex protrudes from the virus surface as a spike. There seems to be as few as 10 spikes on the average virion. Specific enzymatic cleavages in vivo yield mature proteins. Envelope glycoproteins are synthesized as an inactive precursor that is heavily N-glycosylated and processed likely by host cell furin in the Golgi to yield the mature SU and TM proteins. The cleavage site between SU and TM requires the minimal sequence [KR]-X-[KR]-R. Post-translationally, palmitoylation of the transmembrane protein and of Env polyprotein (prior to its proteolytic cleavage) is essential for their association with host cell membrane lipid rafts. Palmitoylation is therefore required for envelope trafficking to classical lipid rafts, but not for viral replication.

It localises to the virion membrane. The protein resides in the host cell membrane. Its subcellular location is the host endosome membrane. Its function is as follows. The surface protein gp120 (SU) attaches the virus to the host lymphoid cell by binding to the primary receptor CD4. This interaction induces a structural rearrangement creating a high affinity binding site for a chemokine coreceptor like CXCR4 and/or CCR5. This peculiar 2 stage receptor-interaction strategy allows gp120 to maintain the highly conserved coreceptor-binding site in a cryptic conformation, protected from neutralizing antibodies. Since CD4 also displays a binding site for the disulfide-isomerase P4HB/PDI, a P4HB/PDI-CD4-CXCR4-gp120 complex may form. In that complex, P4HB/PDI could reach and reduce gp120 disulfide bonds, causing major conformational changes in gp120. TXN, another PDI family member could also be involved in disulfide rearrangements in Env during fusion. These changes are transmitted to the transmembrane protein gp41 and are thought to activate its fusogenic potential by unmasking its fusion peptide. Functionally, the surface protein gp120 is a ligand for CD209/DC-SIGN and CLEC4M/DC-SIGNR, which are respectively found on dendritic cells (DCs), and on endothelial cells of liver sinusoids and lymph node sinuses. These interactions allow capture of viral particles at mucosal surfaces by these cells and subsequent transmission to permissive cells. DCs are professional antigen presenting cells, critical for host immunity by inducing specific immune responses against a broad variety of pathogens. They act as sentinels in various tissues where they take up antigen, process it, and present it to T-cells following migration to lymphoid organs. HIV subverts the migration properties of dendritic cells to gain access to CD4+ T-cells in lymph nodes. Virus transmission to permissive T-cells occurs either in trans (without DCs infection, through viral capture and transmission), or in cis (following DCs productive infection, through the usual CD4-gp120 interaction), thereby inducing a robust infection. In trans infection, bound virions remain infectious over days and it is proposed that they are not degraded, but protected in non-lysosomal acidic organelles within the DCs close to the cell membrane thus contributing to the viral infectious potential during DCs' migration from the periphery to the lymphoid tissues. On arrival at lymphoid tissues, intact virions recycle back to DCs' cell surface allowing virus transmission to CD4+ T-cells. Virion capture also seems to lead to MHC-II-restricted viral antigen presentation, and probably to the activation of HIV-specific CD4+ cells. In terms of biological role, the transmembrane protein gp41 (TM) acts as a class I viral fusion protein. Under the current model, the protein has at least 3 conformational states: pre-fusion native state, pre-hairpin intermediate state, and post-fusion hairpin state. During fusion of viral and target intracellular membranes, the coiled coil regions (heptad repeats) assume a trimer-of-hairpins structure, positioning the fusion peptide in close proximity to the C-terminal region of the ectodomain. The formation of this structure appears to drive apposition and subsequent fusion of viral and target cell membranes. Complete fusion occurs in host cell endosomes and is dynamin-dependent, however some lipid transfer might occur at the plasma membrane. The virus undergoes clathrin-dependent internalization long before endosomal fusion, thus minimizing the surface exposure of conserved viral epitopes during fusion and reducing the efficacy of inhibitors targeting these epitopes. Membranes fusion leads to delivery of the nucleocapsid into the cytoplasm. The envelope glycoprotein gp160 precursor down-modulates cell surface CD4 antigen by interacting with it in the endoplasmic reticulum and blocking its transport to the cell surface. Its function is as follows. The gp120-gp41 heterodimer seems to contribute to T-cell depletion during HIV-1 infection. The envelope glycoproteins expressed on the surface of infected cells induce apoptosis through an interaction with uninfected cells expressing the receptor (CD4) and the coreceptors CXCR4 or CCR5. This type of bystander killing may be obtained by at least three distinct mechanisms. First, the interaction between the 2 cells can induce cellular fusion followed by nuclear fusion within the syncytium. Syncytia are condemned to die from apoptosis. Second, the 2 interacting cells may not fuse entirely and simply exchange plasma membrane lipids, after a sort of hemifusion process, followed by rapid death. Third, it is possible that virus-infected cells, on the point of undergoing apoptosis, fuse with CD4-expressing cells, in which case apoptosis is rapidly transmitted from one cell to the other and thus occurs in a sort of contagious fashion. Functionally, the gp120-gp41 heterodimer allows rapid transcytosis of the virus through CD4 negative cells such as simple epithelial monolayers of the intestinal, rectal and endocervical epithelial barriers. Both gp120 and gp41 specifically recognize glycosphingolipids galactosyl-ceramide (GalCer) or 3' sulfo-galactosyl-ceramide (GalS) present in the lipid rafts structures of epithelial cells. Binding to these alternative receptors allows the rapid transcytosis of the virus through the epithelial cells. This transcytotic vesicle-mediated transport of virions from the apical side to the basolateral side of the epithelial cells does not involve infection of the cells themselves. The polypeptide is Envelope glycoprotein gp160 (env) (Human immunodeficiency virus type 2 subtype A (isolate KR) (HIV-2)).